The following is a 388-amino-acid chain: Spermosin (388 aa).

The signal sequence occupies residues 1–22 (MAAINVIFISGAIALFALTGSC). Over residues 29 to 49 (FTNKPYATQNPYSPPQTNQPT) the composition is skewed to polar residues. Residues 29-98 (FTNKPYATQN…SENSESENSE (70 aa)) form a disordered region. A compositionally biased stretch (pro residues) spans 54-64 (QPGPAPTPAPY). 5 disulfide bridges follow: Cys-116–Cys-251, Cys-163–Cys-179, Cys-265–Cys-330, Cys-295–Cys-310, and Cys-320–Cys-349. Residues 130–372 (IVGGAEAVPN…NLEWLCCYMP (243 aa)) enclose the Peptidase S1 domain. Catalysis depends on charge relay system residues His-178 and Asp-231. Ser-324 acts as the Charge relay system in catalysis.

It belongs to the peptidase S1 family. In terms of assembly, heterodimer of a heavy chain and either an L1 light chain or an L2 light chain linked by a disulfide bond. In terms of tissue distribution, detected in sperm, but not in unfertilized eggs (at protein level). Expressed in gonad, but not in hepatopancreas, intestine or branchial basket.

Its subcellular location is the secreted. The enzyme catalyses Hydrolyzes arginyl bonds, preferably with Pro in the P2 position.. Inhibited by peptidyl-argininals with Pro in the P2 position, diisopropyl fluorophosphate, phenylmethanesulfonyl fluoride, leupeptin, antipain, soybean trypsin inhibitor, aprotinin, ovomucoid, valyl-prolyl-arginyl-chloromethane, glycyl-valyl-arginyl-chloromethane, p-aminobenzamidine, benzamidine, zinc chloride and mercuric chloride. Trypsin-like protease with a narrow substrate specificity. Preferentially hydrolyzes substrates with Pro in the P2 position and Val in the P3 position. Plays a role in fertilization. The polypeptide is Spermosin (Halocynthia roretzi (Sea squirt)).